Reading from the N-terminus, the 699-residue chain is Mannan-binding lectin serine protease 1 (699 aa).

A signal peptide spans 1–19 (MRWLLLYYALCFSLSKASA). One can recognise a CUB 1 domain in the interval 20–138 (HTVELNNMFG…TGFDAHYMAV (119 aa)). Residues 20–184 (HTVELNNMFG…HTDNRTCRVE (165 aa)) form a homodimerization region. The interval 20 to 184 (HTVELNNMFG…HTDNRTCRVE (165 aa)) is interaction with MBL2. The segment at 20–278 (HTVELNNMFG…STQSHSVLIL (259 aa)) is interaction with FCN2. Asn-49 carries N-linked (GlcNAc...) asparagine glycosylation. Ca(2+) contacts are provided by Glu-68, Asp-76, Asp-121, Ser-123, Asp-139, Val-140, and Glu-142. Residues Cys-73 and Cys-91 are joined by a disulfide bond. Residues 139–182 (DVDECKEREDEELSCDHYCHNYIGGYYCSCRFGYILHTDNRTCR) enclose the EGF-like; calcium-binding domain. Cystine bridges form between Cys-143–Cys-157, Cys-153–Cys-166, Cys-168–Cys-181, and Cys-185–Cys-212. Residues Asn-159, Tyr-160, and Gly-163 each contribute to the Ca(2+) site. Asn-159 carries the (3R)-3-hydroxyasparagine modification. The N-linked (GlcNAc...) (complex) asparagine glycan is linked to Asn-178. Residues 185 to 297 (CSDNLFTQRT…RGWRLSYRAA (113 aa)) enclose the CUB 2 domain. Ca(2+)-binding residues include Glu-235, Asp-245, Asp-282, and Ser-284. Cys-242 and Cys-260 are joined by a disulfide. 2 consecutive Sushi domains span residues 299-364 (NECP…TCKI) and 365-434 (VDCR…TCLP). 6 disulfides stabilise this stretch: Cys-301–Cys-349, Cys-329–Cys-362, Cys-367–Cys-414, Cys-397–Cys-432, Cys-436–Cys-572, and Cys-475–Cys-491. Asn-385 carries N-linked (GlcNAc...) (complex) asparagine glycosylation. Asn-407 is a glycosylation site (N-linked (GlcNAc...) asparagine). The 248-residue stretch at 449–696 (IFNGRPAQKG…NKDWIQRVTG (248 aa)) folds into the Peptidase S1 domain. His-490 acts as the Charge relay system in catalysis. Residue Leu-533 is glycosylated (N-linked (GlcNAc) asparagine). Asp-552 serves as the catalytic Charge relay system. N-linked (GlcNAc) asparagine glycosylation occurs at Glu-599. Intrachain disulfides connect Cys-614/Cys-631 and Cys-642/Cys-672. Ser-646 serves as the catalytic Charge relay system.

Belongs to the peptidase S1 family. In terms of assembly, homodimer. Interacts with the oligomeric lectins MBL2, FCN2 and FCN3; triggers the lectin pathway of complement through activation of C3. Interacts with SERPING1. Interacts with COLEC11; probably triggers the lectin pathway of complement. In terms of processing, the iron and 2-oxoglutarate dependent 3-hydroxylation of aspartate and asparagine is (R) stereospecific within EGF domains. Post-translationally, N-glycosylated. Some N-linked glycan are of the complex-type. Autoproteolytic processing of the proenzyme produces the active enzyme composed on the heavy and the light chain held together by a disulfide bond. Isoform 1 but not isoform 2 is activated through autoproteolytic processing. As to expression, protein of the plasma which is primarily expressed by liver.

The protein resides in the secreted. Its activity is regulated as follows. Inhibited by SERPING1 and A2M. Its function is as follows. Functions in the lectin pathway of complement, which performs a key role in innate immunity by recognizing pathogens through patterns of sugar moieties and neutralizing them. The lectin pathway is triggered upon binding of mannan-binding lectin (MBL) and ficolins to sugar moieties which leads to activation of the associated proteases MASP1 and MASP2. Functions as an endopeptidase and may activate MASP2 or C2 or directly activate C3 the key component of complement reaction. Isoform 2 may have an inhibitory effect on the activation of the lectin pathway of complement or may cleave IGFBP5. Also plays a role in development. The polypeptide is Mannan-binding lectin serine protease 1 (MASP1) (Homo sapiens (Human)).